The sequence spans 209 residues: uncharacterized protein (209 aa).

Helical transmembrane passes span 21-41 (LAYL…VFGL), 81-101 (ILGL…RIAA), 107-127 (VLVN…LYVF), and 159-179 (AAGA…LLFF).

Its subcellular location is the cell membrane. This is an uncharacterized protein from Bacillus subtilis (strain 168).